We begin with the raw amino-acid sequence, 108 residues long: UPF0060 membrane protein RSKD131_0092 (108 aa).

4 helical membrane passes run 5–25 (LAAY…VWAW), 32–52 (ALWL…LALT), 62–82 (AVYG…VEGV), and 86–106 (RWDM…LWAP).

The protein belongs to the UPF0060 family.

It localises to the cell inner membrane. The protein is UPF0060 membrane protein RSKD131_0092 of Cereibacter sphaeroides (strain KD131 / KCTC 12085) (Rhodobacter sphaeroides).